The chain runs to 224 residues: Ribosomal RNA small subunit methyltransferase I (224 aa).

Belongs to the methyltransferase superfamily. RsmI family.

The protein resides in the cytoplasm. The catalysed reaction is cytidine(1402) in 16S rRNA + S-adenosyl-L-methionine = 2'-O-methylcytidine(1402) in 16S rRNA + S-adenosyl-L-homocysteine + H(+). Its function is as follows. Catalyzes the 2'-O-methylation of the ribose of cytidine 1402 (C1402) in 16S rRNA. The chain is Ribosomal RNA small subunit methyltransferase I from Borrelia garinii subsp. bavariensis (strain ATCC BAA-2496 / DSM 23469 / PBi) (Borreliella bavariensis).